Here is a 276-residue protein sequence, read N- to C-terminus: Undecaprenyl-diphosphatase (276 aa).

6 helical membrane-spanning segments follow: residues 43–63 (RAMA…VWEF), 85–105 (LNLL…ADTI), 109–129 (LFNA…MLWA), 183–203 (AATE…AVYS), 218–238 (VFAI…RALL), and 254–274 (IAFG…WASA).

It belongs to the UppP family.

The protein resides in the cell inner membrane. The catalysed reaction is di-trans,octa-cis-undecaprenyl diphosphate + H2O = di-trans,octa-cis-undecaprenyl phosphate + phosphate + H(+). In terms of biological role, catalyzes the dephosphorylation of undecaprenyl diphosphate (UPP). Confers resistance to bacitracin. The chain is Undecaprenyl-diphosphatase from Pseudomonas syringae pv. tomato (strain ATCC BAA-871 / DC3000).